The chain runs to 76 residues: Small ribosomal subunit protein bS18 (76 aa).

This sequence belongs to the bacterial ribosomal protein bS18 family. Part of the 30S ribosomal subunit. Forms a tight heterodimer with protein bS6.

Its function is as follows. Binds as a heterodimer with protein bS6 to the central domain of the 16S rRNA, where it helps stabilize the platform of the 30S subunit. This is Small ribosomal subunit protein bS18 from Xanthomonas euvesicatoria pv. vesicatoria (strain 85-10) (Xanthomonas campestris pv. vesicatoria).